We begin with the raw amino-acid sequence, 528 residues long: Zinc finger protein 16-like (528 aa).

The disordered stretch occupies residues 1–28 (MSRKRNHCYMETGASSESQGAFVDSAGP). Residues 79 to 106 (IRVLKMELREKSDEIELLKAKLESAEKD) are a coiled coil. 2 disordered regions span residues 159–202 (GAAE…TDAE) and 232–293 (FKGD…DRME). Positions 232–242 (FKGDSETKCED) are enriched in basic and acidic residues. A compositionally biased stretch (acidic residues) spans 244–256 (PPMDEEDENEDSE). Basic and acidic residues-rich tracts occupy residues 257 to 270 (EGRGSLRSVSDHFP) and 278 to 293 (GEDRSSPAEDSMDRME). The C2H2-type 1 zinc-finger motif lies at 303–326 (FICPFCGTLCPDSSFLEEHIKLMH). Residues 333-345 (QSTSAGSSSQAEG) are compositionally biased toward low complexity. The interval 333-359 (QSTSAGSSSQAEGDSGEAGPASRGARE) is disordered. 4 consecutive C2H2-type zinc fingers follow at residues 366-388 (YECGDCGRHFNYLGNLRQHQRIH), 394-416 (FVCPECGERFRHTARLKSHRLSH), 423-445 (FPCPQCGKGFPVLSGLKRHQRVH), and 451-473 (YACPQCGRRFKELGNLYTHMRIH). The segment at 479 to 501 (YTCYQCGRSFRHLGTYKSHRCMP) adopts a C2H2-type 6; degenerate zinc-finger fold. Residues 502-528 (ATQMPSEHSPPWAQEDKVQTGRLQGYV) are disordered.

Belongs to the krueppel C2H2-type zinc-finger protein family.

It localises to the nucleus. Functionally, probable transcription factor. Important for development and migration of oligodendrocyte precursor cells, and normal myelination of axons in the central nervous system (CNS). Functions autonomously in oligodendrocytes to promote CNS myelination. Seems to act in parallel with notch3 during oligodendrocyte development. The sequence is that of Zinc finger protein 16-like from Danio rerio (Zebrafish).